A 608-amino-acid chain; its full sequence is ATM1-type heavy metal exporter (608 aa).

Over Met1–Arg38 the chain is Cytoplasmic. The helical transmembrane segment at Val39–Tyr60 threads the bilayer. An ABC transmembrane type-1 domain is found at Val39–Gln327. Over Lys61–Ala82 the chain is Periplasmic. A helical transmembrane segment spans residues Phe83 to Phe105. Topologically, residues Glu106 to Met154 are cytoplasmic. A helical transmembrane segment spans residues Leu155–Leu178. Residue Asn179 is a topological domain, periplasmic. A helical membrane pass occupies residues Phe180–Ile202. Over Thr203 to Gly266 the chain is Cytoplasmic. Glutathione contacts are provided by residues Arg206 to Arg210 and Asn269 to Gln272. A helical transmembrane segment spans residues Leu267–Ala285. At Trp286–Asp300 the chain is on the periplasmic side. A helical transmembrane segment spans residues Leu301–Tyr322. Glutathione is bound at residue Asp316–Gly319. At Arg323–Glu608 the chain is on the cytoplasmic side. The ABC transporter domain maps to Val361 to Arg595. ATP-binding positions include Tyr370 and Gly394 to Arg405.

It belongs to the ABC transporter superfamily. ABCB family. Heavy Metal importer (TC 3.A.1.210) subfamily. In terms of assembly, homodimer.

The protein localises to the cell inner membrane. Functionally, mediates the ATP-dependent export of glutathione-conjugated substrates, such as heavy metal-glutathione conjugates. ATP hydrolysis is stimulated by glutathione binding. Protects cells against toxic heavy metal ions, such as silver and mercury ions. May also mediate the transport of glutathione-conjugated aromatic hydrocarbons, such as dinitrobenzene. In Novosphingobium aromaticivorans (strain ATCC 700278 / DSM 12444 / CCUG 56034 / CIP 105152 / NBRC 16084 / F199), this protein is ATM1-type heavy metal exporter (atm1).